We begin with the raw amino-acid sequence, 628 residues long: DNA mismatch repair protein MutL (628 aa).

Residues 335–411 are disordered; sequence SVDIEPESEQ…ASRNSEVSLP (77 aa). Residues 343–353 show a composition bias toward polar residues; sequence EQTTAWQTSPT.

This sequence belongs to the DNA mismatch repair MutL/HexB family.

In terms of biological role, this protein is involved in the repair of mismatches in DNA. It is required for dam-dependent methyl-directed DNA mismatch repair. May act as a 'molecular matchmaker', a protein that promotes the formation of a stable complex between two or more DNA-binding proteins in an ATP-dependent manner without itself being part of a final effector complex. The protein is DNA mismatch repair protein MutL of Shewanella pealeana (strain ATCC 700345 / ANG-SQ1).